The sequence spans 480 residues: F-box only protein 3 (480 aa).

The region spanning 10–56 (LLTLESLPTDPLLLILSFVDYRDLINCCYVSRRLSQLSTHDPLWRRH) is the F-box domain. The ApaG domain maps to 278–408 (VATTGDITVS…FHMACPTFRV (131 aa)). Positions 419 to 458 (EYEEMEEEAEEEEEEENDDSADMDESDESDADENESDEGE) are enriched in acidic residues. The disordered stretch occupies residues 419–463 (EYEEMEEEAEEEEEEENDDSADMDESDESDADENESDEGEGEARR).

In terms of assembly, part of a SCF (SKP1-cullin-F-box) protein ligase complex SCF(FBXO3) consisting of FBXO3, SKP1, CUL1 and RBX1. Interacts with PML, interaction is direct and takes place either alone or within the SCF complex.

It is found in the nucleus. It functions in the pathway protein modification; protein ubiquitination. Its function is as follows. Substrate recognition component of the SCF (SKP1-CUL1-F-box protein)-type E3 ubiquitin ligase complex, SCF(FBXO3), which mediates the ubiquitination and subsequent proteasomal degradation of target proteins. Mediates the ubiquitination of HIPK2 and probably that of EP300, leading to rapid degradation by the proteasome. In the presence of PML, HIPK2 ubiquitination still occurs, but degradation is prevented. PML, HIPK2 and FBXO3 may act synergically to activate p53/TP53-dependent transactivation. The SCF(FBXO3) also acts as a regulator of inflammation by mediating ubiquitination and degradation of FBXL2: specifically recognizes FBXL2 phosphorylated at 'Thr-404' and promotes its ubiquitination. The chain is F-box only protein 3 (Fbxo3) from Mus musculus (Mouse).